The sequence spans 670 residues: Transcription factor 4 (670 aa).

Residues 1–83 (MHHQQRMAAL…GTPYDHMTSR (83 aa)) are essential for MYOD1 inhibition. Disordered regions lie at residues 24 to 244 (AMFS…LGNS), 262 to 320 (LSYP…SQTG), 335 to 378 (HTNN…EGPL), 406 to 426 (PSTAVPGGHGDMHGIMGPSHN), 465 to 573 (SLLP…MANN), and 637 to 670 (KRREEEKVSSEPPPLSLAGPHPGMGDAANHMGQM). Residues 29–49 (PVSSGKNGPTSLASGHFTGSN) are compositionally biased toward polar residues. Phosphoserine occurs at positions 66, 87, and 92. Polar residues-rich tracts occupy residues 107–125 (GSYSSYGRENVQGCHQQSL), 136–154 (GTLSPTKPGSQYYQYSSNN), 205–215 (PAASTFPSSFF), and 265–305 (PSHS…TDSI). Positions 336–347 (TNNSFSSNPSTP) are enriched in low complexity. Polar residues predominate over residues 364 to 373 (NGGQASSSPN). At serine 371 the chain carries Phosphoserine. The segment at 378–399 (LHSLQSRIEDRLERLDDAIHVL) is leucine-zipper. 2 stretches are compositionally biased toward low complexity: residues 466–479 (LLPNQVPVPQLPVQ) and 502–511 (GQSVSSGSSE). Serine 514 bears the Phosphoserine mark. Composition is skewed to basic and acidic residues over residues 526-542 (KSSEDKKLDDDKKDIKS) and 558-573 (PEQKAEREKERRMANN). The region spanning 567–620 (ERRMANNARERLRVRDINEAFKELGRMVQLHLKSDKPQTKLLILHQAVAVILSL) is the bHLH domain. The interval 622-645 (QQVRERNLNPKAACLKRREEEKVS) is class A specific domain.

In terms of assembly, efficient DNA binding requires dimerization with another bHLH protein. Isoform 2 seems to form inactive heterodimers with MYOD1. Interacts with HIVEP2. Interacts with NEUROD2. Interacts with AGBL1. Interacts with BHLHA9. As to expression, expressed in the cerebral cortex, Purkinje and granule cell layers of the cerebellum, olfactory neuroepithelium, pyramidal cells of hippocampal layers CA1-CA4, and in the granular cells of the dentate gyrus.

Its subcellular location is the nucleus. Transcription factor that binds to the immunoglobulin enhancer Mu-E5/KE5-motif. Involved in the initiation of neuronal differentiation. Activates transcription by binding to the E box (5'-CANNTG-3'). Isoform 2 inhibits MYOD1 activation of the cardiac alpha-actin promoter. Binds to the E-box present in the somatostatin receptor 2 initiator element (SSTR2-INR) to activate transcription. May have a regulatory function in developmental processes as well as during neuronal plasticity. The sequence is that of Transcription factor 4 (Tcf4) from Mus musculus (Mouse).